Here is a 352-residue protein sequence, read N- to C-terminus: Putative killer cell immunoglobulin-like receptor-like protein KIR3DX1 (352 aa).

Positions 1 to 16 (MAPKLITVLCLGFCLN) are cleaved as a signal peptide. 2 Ig-like C2-type domains span residues 17 to 112 (QKIC…NSLK) and 224 to 311 (PSLS…VTRC). 2 disulfide bridges follow: Cys-49–Cys-94 and Cys-244–Cys-295. N-linked (GlcNAc...) asparagine glycosylation is present at Asn-78.

Expressed in NK-cells.

It localises to the secreted. The sequence is that of Putative killer cell immunoglobulin-like receptor-like protein KIR3DX1 (KIR3DX1) from Homo sapiens (Human).